Reading from the N-terminus, the 495-residue chain is Trigger factor (495 aa).

The PPIase FKBP-type domain occupies 162–243; that stretch reads DDFVSIDLSA…VKSLKERELP (82 aa). A compositionally biased stretch (basic and acidic residues) spans 425 to 437; sequence DTDGNEIDPKEYF. The disordered stretch occupies residues 425-495; it reads DTDGNEIDPK…TDDDSENAEK (71 aa). Over residues 450–461 the composition is skewed to low complexity; it reads SADAEASENSEA. Acidic residues predominate over residues 486 to 495; that stretch reads TDDDSENAEK.

The protein belongs to the FKBP-type PPIase family. Tig subfamily.

The protein localises to the cytoplasm. The catalysed reaction is [protein]-peptidylproline (omega=180) = [protein]-peptidylproline (omega=0). Its function is as follows. Involved in protein export. Acts as a chaperone by maintaining the newly synthesized protein in an open conformation. Functions as a peptidyl-prolyl cis-trans isomerase. The chain is Trigger factor from Corynebacterium kroppenstedtii (strain DSM 44385 / JCM 11950 / CIP 105744 / CCUG 35717).